A 542-amino-acid chain; its full sequence is Global nitrogen regulator NrpR (542 aa).

The tract at residues isoleucine 12–leucine 77 is winged helix-turn-helix. NRD regions lie at residues arginine 85–isoleucine 320 and arginine 321–isoleucine 542.

Belongs to the NrpR family. As to quaternary structure, homodimer.

Under nitrogen limitation, binding of the intracellular nitrogen metabolite 2-oxoglutarate to NrpR decreases the binding affinity of NrpR to DNA, leading to initiation of transcription. Transcriptional repressor of nitrogen fixation and assimilation genes. Binds to two tandem operators in the glnA and nif promoters, thereby blocking transcription of the genes. In Methanocaldococcus jannaschii (strain ATCC 43067 / DSM 2661 / JAL-1 / JCM 10045 / NBRC 100440) (Methanococcus jannaschii), this protein is Global nitrogen regulator NrpR.